The chain runs to 442 residues: Proline--tRNA ligase (442 aa).

Belongs to the class-II aminoacyl-tRNA synthetase family. ProS type 2 subfamily. As to quaternary structure, homodimer.

The protein localises to the cytoplasm. It carries out the reaction tRNA(Pro) + L-proline + ATP = L-prolyl-tRNA(Pro) + AMP + diphosphate. Catalyzes the attachment of proline to tRNA(Pro) in a two-step reaction: proline is first activated by ATP to form Pro-AMP and then transferred to the acceptor end of tRNA(Pro). This is Proline--tRNA ligase from Brucella melitensis biotype 2 (strain ATCC 23457).